A 454-amino-acid chain; its full sequence is UDP-N-acetylmuramoylalanine--D-glutamate ligase (454 aa).

Position 118-124 (118-124) interacts with ATP; sequence GTNGKTT.

The protein belongs to the MurCDEF family.

The protein resides in the cytoplasm. The enzyme catalyses UDP-N-acetyl-alpha-D-muramoyl-L-alanine + D-glutamate + ATP = UDP-N-acetyl-alpha-D-muramoyl-L-alanyl-D-glutamate + ADP + phosphate + H(+). The protein operates within cell wall biogenesis; peptidoglycan biosynthesis. Functionally, cell wall formation. Catalyzes the addition of glutamate to the nucleotide precursor UDP-N-acetylmuramoyl-L-alanine (UMA). This is UDP-N-acetylmuramoylalanine--D-glutamate ligase from Thermosynechococcus vestitus (strain NIES-2133 / IAM M-273 / BP-1).